A 618-amino-acid polypeptide reads, in one-letter code: Glucose starvation modulator protein 1 (618 aa).

A DNA-binding region (zn(2)-C6 fungal-type) is located at residues 20 to 48 (CEFCHTKHIQCDVGRPCQNCLKRNIGKFC). Residues 325-352 (ANANTHPSHNAKLESECDSSSHSDADLE) are disordered. Residues 335 to 352 (AKLESECDSSSHSDADLE) show a composition bias toward basic and acidic residues. The PAS domain maps to 466-538 (LLDLENMAKL…QIFNELLAFG (73 aa)).

It belongs to the ERT1/acuK family.

It localises to the nucleus. In terms of biological role, transcription factor which regulates nonfermentable carbon utilization. Binds specifically to 5'-CGGN(8)CGG-3' and 5'-CGGN(9)CGG-3' sequences in the promoter region. The chain is Glucose starvation modulator protein 1 (GSM1) from Saccharomyces cerevisiae (strain YJM789) (Baker's yeast).